Reading from the N-terminus, the 227-residue chain is Orotidine 5'-phosphate decarboxylase (227 aa).

Substrate-binding positions include aspartate 8, lysine 30, 58–67 (DLKVHDIPNT), threonine 117, arginine 177, glutamine 186, glycine 206, and arginine 207. The active-site Proton donor is lysine 60.

The protein belongs to the OMP decarboxylase family. Type 1 subfamily. Homodimer.

It carries out the reaction orotidine 5'-phosphate + H(+) = UMP + CO2. It participates in pyrimidine metabolism; UMP biosynthesis via de novo pathway; UMP from orotate: step 2/2. In terms of biological role, catalyzes the decarboxylation of orotidine 5'-monophosphate (OMP) to uridine 5'-monophosphate (UMP). In Campylobacter fetus subsp. fetus (strain 82-40), this protein is Orotidine 5'-phosphate decarboxylase.